Reading from the N-terminus, the 417-residue chain is Serine/threonine transporter SstT (417 aa).

The next 8 helical transmembrane spans lie at 21–41, 49–69, 83–103, 142–162, 193–213, 218–238, 291–311, and 331–351; these read ILAG…VAKM, FISA…MASI, ILVL…VASF, ALIN…GLAL, IGIF…ALAG, LLVL…LIVF, IPLG…ILTL, and LVAA…LLLI.

Belongs to the dicarboxylate/amino acid:cation symporter (DAACS) (TC 2.A.23) family.

The protein localises to the cell inner membrane. The catalysed reaction is L-serine(in) + Na(+)(in) = L-serine(out) + Na(+)(out). It catalyses the reaction L-threonine(in) + Na(+)(in) = L-threonine(out) + Na(+)(out). Its function is as follows. Involved in the import of serine and threonine into the cell, with the concomitant import of sodium (symport system). In Proteus mirabilis (strain HI4320), this protein is Serine/threonine transporter SstT.